The sequence spans 122 residues: MIQTETVLNVADNSGAKKVLCIRVLGGSRKRYASIGDVIVVTVKEAIPHAKVKKGDVMKAVVVRTAKENRRPDDTWVKFDENAAVMLGASGEPVGTRIFGPVARELRNQGFMKIISLAPEVL.

The protein belongs to the universal ribosomal protein uL14 family. As to quaternary structure, part of the 50S ribosomal subunit. Forms a cluster with proteins L3 and L19. In the 70S ribosome, L14 and L19 interact and together make contacts with the 16S rRNA in bridges B5 and B8.

In terms of biological role, binds to 23S rRNA. Forms part of two intersubunit bridges in the 70S ribosome. This is Large ribosomal subunit protein uL14 from Desulfotalea psychrophila (strain LSv54 / DSM 12343).